The sequence spans 111 residues: Ig kappa chain V-III region PC 2485/PC 4039 (111 aa).

The framework-1 stretch occupies residues 1–23 (DIVLTQSPASLAVSLGQRATISC). An intrachain disulfide couples C23 to C92. The interval 24–38 (RASKSVSTSGYSYMH) is complementarity-determining-1. A framework-2 region spans residues 39–53 (WYQQKPGQPPKLLIY). Residues 54-60 (LASSLES) form a complementarity-determining-2 region. The segment at 61–92 (GVPARFSGSGSGTDFTLNIQPVEEEDAAIYYC) is framework-3. The tract at residues 93–101 (QHSRELPLT) is complementarity-determining-3. A framework-4 region spans residues 102 to 111 (FGAGTKLELK).

This chain is Ig kappa chain V-III region PC 2485/PC 4039, found in Mus musculus (Mouse).